Here is a 138-residue protein sequence, read N- to C-terminus: Large ribosomal subunit protein uL16 (138 aa).

The protein belongs to the universal ribosomal protein uL16 family. In terms of assembly, part of the 50S ribosomal subunit.

Its function is as follows. Binds 23S rRNA and is also seen to make contacts with the A and possibly P site tRNAs. In Nitrosomonas europaea (strain ATCC 19718 / CIP 103999 / KCTC 2705 / NBRC 14298), this protein is Large ribosomal subunit protein uL16.